The chain runs to 1053 residues: 3-hydroxy-3-methylglutaryl-coenzyme A reductase (1053 aa).

Residues 1–8 are Cytoplasmic-facing; sequence MIYKLAAR. The chain crosses the membrane as a helical span at residues 9-29; the sequence is YPIQVIAIVGILVSMAYFSFL. Over 30-203 the chain is Lumenal; sequence EALTQEDFPV…LKIASQASKT (174 aa). N137 is a glycosylation site (N-linked (GlcNAc...) asparagine). The helical transmembrane segment at 204–224 threads the bilayer; it reads ELLIVGTAYACMLISIVSLYL. An SSD domain is found at 204–365; that stretch reads ELLIVGTAYA…FSFFVAILTL (162 aa). At 225–232 the chain is on the cytoplasmic side; that stretch reads KMRRLGSK. A helical transmembrane segment spans residues 233-253; it reads FWLFFSVLLSTLFSVQFAMTL. Residues 254-258 lie on the Lumenal side of the membrane; it reads VRASG. The helical transmembrane segment at 259 to 279 threads the bilayer; that stretch reads VRISLVSLIESLPFLINVVAL. The Cytoplasmic portion of the chain corresponds to 280–320; the sequence is DKAAELTRQVITRCSVSDSHSPMHEDIAKACRNAAPPILRH. The next 2 helical transmembrane spans lie at 321-341 and 342-362; these read FSFG…IKQF and FLFA…FVAI. Residues 363-417 lie on the Cytoplasmic side of the membrane; it reads LTLKLEMRRYNAKDDVRKVLIEEGLSESTARHVADGNDSSATTSAGSRYFKVRYG. Residues 418 to 438 traverse the membrane as a helical segment; it reads TKIILFIFIAFNLFELCSIPF. The Lumenal segment spans residues 439 to 526; it reads KHYAATSAAA…NNWSHYISAS (88 aa). Residue N518 is glycosylated (N-linked (GlcNAc...) asparagine). Residues 527–547 traverse the membrane as a helical segment; the sequence is FLSKWIVCALSLSIAVNVFLL. Over 548–1053 the chain is Cytoplasmic; that stretch reads NAARLNSIKE…KSVNSRVPGR (506 aa). E712 acts as the Charge relay system in catalysis. Position 718 to 724 (718 to 724) interacts with CoA; the sequence is STMRGCK. NADP(+) is bound by residues 779-781 and 806-814; these read SRF and DAMGMNMIS. The Charge relay system role is filled by K846. Position 875–877 (875–877) interacts with CoA; that stretch reads VLK. The active-site Charge relay system is the D922. 1017 to 1018 contacts CoA; the sequence is SH. H1018 serves as the catalytic Proton donor. 1022–1023 provides a ligand contact to NADP(+); it reads NR. Phosphoserine is present on S1024. At T1028 the chain carries Phosphothreonine. Residues 1028–1053 are disordered; the sequence is TPAMDSSAKKPATDALKSVNSRVPGR.

It belongs to the HMG-CoA reductase family.

The protein localises to the endoplasmic reticulum membrane. It localises to the nucleus envelope. The catalysed reaction is (R)-mevalonate + 2 NADP(+) + CoA = (3S)-3-hydroxy-3-methylglutaryl-CoA + 2 NADPH + 2 H(+). It participates in metabolic intermediate biosynthesis; (R)-mevalonate biosynthesis; (R)-mevalonate from acetyl-CoA: step 3/3. Its function is as follows. Part of the first module of ergosterol biosynthesis pathway that includes the early steps of the pathway, conserved across all eukaryotes, and which results in the formation of mevalonate from acetyl-coenzyme A (acetyl-CoA). Hmg1 catalyzes the reduction of hydroxymethylglutaryl-CoA (HMG-CoA) to mevalonate. The first module starts with the action of the cytosolic acetyl-CoA acetyltransferase eg10 that catalyzes the formation of acetoacetyl-CoA. The hydroxymethylglutaryl-CoA synthases erg13 then condenses acetyl-CoA with acetoacetyl-CoA to form HMG-CoA. The rate-limiting step of the early module is the reduction to mevalonate by the 3-hydroxy-3-methylglutaryl-coenzyme A (HMG-CoA) reductases hcs1. The protein is 3-hydroxy-3-methylglutaryl-coenzyme A reductase of Schizosaccharomyces pombe (strain 972 / ATCC 24843) (Fission yeast).